Consider the following 397-residue polypeptide: Cell division protein DivIB (397 aa).

Topologically, residues 1–138 (MTTKDKGDQK…RIERIHLYRA (138 aa)) are cytoplasmic. Basic and acidic residues predominate over residues 24–37 (QEYLEKKSQEKASE). A disordered region spans residues 24–115 (QEYLEKKSQE…DRTEKFIGQA (92 aa)). Residues 74–103 (ASDDDETNESEESEDVEEPEEENIEESSDV) are compositionally biased toward acidic residues. A helical membrane pass occupies residues 139–159 (LPVLVISSLLILLSLYFITPL). A POTRA domain is found at 160-231 (GSLKNLVVTG…ITFKIQVTEY (72 aa)). Topologically, residues 160–397 (GSLKNLVVTG…PSDVTDETNN (238 aa)) are extracellular. A disordered region spans residues 360–397 (LVQKEEQDQEQEKEESSEETVPGETEAAPSDVTDETNN). Positions 366 to 377 (QDQEQEKEESSE) are enriched in acidic residues.

It belongs to the FtsQ/DivIB family. DivIB subfamily.

It is found in the cell membrane. Cell division protein that may be involved in stabilizing or promoting the assembly of the division complex. In Streptococcus gordonii (strain Challis / ATCC 35105 / BCRC 15272 / CH1 / DL1 / V288), this protein is Cell division protein DivIB.